Here is a 228-residue protein sequence, read N- to C-terminus: ATP-dependent dethiobiotin synthetase BioD (228 aa).

Asp14–Leu19 serves as a coordination point for ATP. Residue Thr18 coordinates Mg(2+). Lys39 is a catalytic residue. Residues Asp56, Glu117 to Gly120, and Pro206 to Leu208 each bind ATP. Mg(2+) contacts are provided by Asp56 and Glu117.

The protein belongs to the dethiobiotin synthetase family. In terms of assembly, homodimer. Mg(2+) serves as cofactor.

The protein localises to the cytoplasm. The catalysed reaction is (7R,8S)-7,8-diammoniononanoate + CO2 + ATP = (4R,5S)-dethiobiotin + ADP + phosphate + 3 H(+). It functions in the pathway cofactor biosynthesis; biotin biosynthesis; biotin from 7,8-diaminononanoate: step 1/2. Its function is as follows. Catalyzes a mechanistically unusual reaction, the ATP-dependent insertion of CO2 between the N7 and N8 nitrogen atoms of 7,8-diaminopelargonic acid (DAPA, also called 7,8-diammoniononanoate) to form a ureido ring. This Cellvibrio japonicus (strain Ueda107) (Pseudomonas fluorescens subsp. cellulosa) protein is ATP-dependent dethiobiotin synthetase BioD.